Consider the following 272-residue polypeptide: uncharacterized protein (272 aa).

This is an uncharacterized protein from Archaeoglobus fulgidus (strain ATCC 49558 / DSM 4304 / JCM 9628 / NBRC 100126 / VC-16).